Consider the following 489-residue polypeptide: MRLLLPFSSPLSATSSPSTPQFIPELPPPSQFDYSGLTKILKKSVIGTLTGALSLTLVFSSPISSVAATNDPYLSVNPPSSSFESSLNHFDSAPEDCPNEEEADTEIQDDDIEPQLVTNEGIVEEAWEIVNGAFLDTRSHSWTPETWQKQKDDILASPIKSRSKAHEVIKNMLASLGDQYTRFLSPDEFSRMSKYDITGIGINLREVSDGGGNVKLKVLGLVLDSAADIAGVKQGDEILAVNGMDVSGKSSFEVSSLLQGPSKTFVVLKVKHGKCGPVKSLKIQRQVNAQTPVSYRLEKVDNGTVSVGYIRLKEFNALARKDLVIAMKRLLDKGASYFVMDLRDNLGGLVQAGIETAKLFLDEGDTVIYTAGRDPEAQKTVVSDKKPLITAPLIVMVNNRTASASEIVASALHDNCKAVLVGERTYGKGLIQSVYELRDGSGVVVTIGKYVTPNHMDINGGGIEPDFRNLPAWDEVKERLSKCSILQQS.

Residues 1-20 (MRLLLPFSSPLSATSSPSTP) are compositionally biased toward low complexity. The disordered stretch occupies residues 1–27 (MRLLLPFSSPLSATSSPSTPQFIPELP). Residues 189–273 (FSRMSKYDIT…TFVVLKVKHG (85 aa)) form the PDZ domain. Residues Ser403 and Lys428 each act as charge relay system in the active site.

This sequence belongs to the peptidase S41A family.

It is found in the plastid. Its subcellular location is the chloroplast thylakoid lumen. It catalyses the reaction The enzyme shows specific recognition of a C-terminal tripeptide, Xaa-Yaa-Zaa, in which Xaa is preferably Ala or Leu, Yaa is preferably Ala or Tyr, and Zaa is preferably Ala, but then cleaves at a variable distance from the C-terminus. A typical cleavage is -Ala-Ala-|-Arg-Ala-Ala-Lys-Glu-Asn-Tyr-Ala-Leu-Ala-Ala.. Its function is as follows. Protease involved in the C-terminal processing of the chloroplastic D1 protein of photosystem II. This proteolytic processing is necessary to allow the light-driven assembly of the tetranuclear manganese cluster, which is responsible for photosynthetic water oxidation. This is Carboxyl-terminal-processing peptidase 1, chloroplastic (CTPA1) from Arabidopsis thaliana (Mouse-ear cress).